Reading from the N-terminus, the 199-residue chain is Cytochrome c-type cyt cy (199 aa).

A helical membrane pass occupies residues 7–27 (ITKIGVTLFAVALFYGFIYML). Over residues 69–80 (AAETAEAAAPAE) the composition is skewed to low complexity. Residues 69-93 (AAETAEAAAPAEPAAPPPPAYVEVD) are disordered. Positions 112, 115, 116, and 148 each coordinate heme c.

Post-translationally, binds 1 heme c group covalently per subunit.

It is found in the cell membrane. Functionally, electron transfer pathways that operates during photosynthesis. In Rhodobacter capsulatus (strain ATCC BAA-309 / NBRC 16581 / SB1003), this protein is Cytochrome c-type cyt cy (cycY).